The chain runs to 289 residues: 3-methyl-2-oxobutanoate hydroxymethyltransferase (289 aa).

Mg(2+) contacts are provided by Asp50 and Asp89. 3-methyl-2-oxobutanoate contacts are provided by residues 50-51 (DS), Asp89, and Lys119. Glu121 is a Mg(2+) binding site. Glu188 serves as the catalytic Proton acceptor. A disordered region spans residues 266-289 (AQHSFGMPEDEQRRWEENVSGADD).

Belongs to the PanB family. As to quaternary structure, homodecamer; pentamer of dimers. Requires Mg(2+) as cofactor.

Its subcellular location is the cytoplasm. The enzyme catalyses 3-methyl-2-oxobutanoate + (6R)-5,10-methylene-5,6,7,8-tetrahydrofolate + H2O = 2-dehydropantoate + (6S)-5,6,7,8-tetrahydrofolate. The protein operates within cofactor biosynthesis; (R)-pantothenate biosynthesis; (R)-pantoate from 3-methyl-2-oxobutanoate: step 1/2. Catalyzes the reversible reaction in which hydroxymethyl group from 5,10-methylenetetrahydrofolate is transferred onto alpha-ketoisovalerate to form ketopantoate. This is 3-methyl-2-oxobutanoate hydroxymethyltransferase from Oleidesulfovibrio alaskensis (strain ATCC BAA-1058 / DSM 17464 / G20) (Desulfovibrio alaskensis).